The sequence spans 137 residues: Protein BNS1 (137 aa).

Functionally, component of the FEAR (CDC14 early anaphase release) network which promotes CDC14 release from the nucleolus during early anaphase and is required for the efficient segregation of telomeric and nucleolar regions. Although BNS1 can partially compensate for a lack of SPO12 function when overexpressed, it does not appear to play any role in controlling meiotic nuclear division. The sequence is that of Protein BNS1 (BNS1) from Saccharomyces cerevisiae (strain ATCC 204508 / S288c) (Baker's yeast).